Consider the following 218-residue polypeptide: MTRHFAIFTVFLVGFVLYSECQISAMFGNPIQAANCETWSEWGPCVWLKGKEKRWQRTYFEQLLPGRKGCRNHVFFRLLKDRWGVAFNNFYTYLRDTTTSEEQCGECSYQQSCGRKCHRRGDIGIINPLFVAERKCMGVDQSKACVSTFKQDCKLWPNPEIKLPNVTESMQQIIDNLDYLQCVPEHRPSGSVCRCCCHPYTPNPQTFECELKPYLSGK.

This is an uncharacterized protein from Caenorhabditis elegans.